A 573-amino-acid chain; its full sequence is Thiol:disulfide interchange protein DsbD (573 aa).

The first 20 residues, 1–20 (MLKRFFLLLSSLLLVCNVQA), serve as a signal peptide directing secretion. Topologically, residues 21–175 (GLFNNKPQYL…AENLSNNYLS (155 aa)) are periplasmic. 2 disulfides stabilise this stretch: Cys-121–Cys-126 and Cys-191–Cys-313. Residues 176-196 (IFGFLLLGIGLAFTPCVLPML) traverse the membrane as a helical segment. Residues 197–227 (PLLSAIVIGHKNRPNTSRALLLSFTYVQGMA) are Cytoplasmic-facing. A helical transmembrane segment spans residues 228-248 (LTYTLLGLTVAAIGLPFQVAL). Residues 249–251 (QSP) are Periplasmic-facing. A helical transmembrane segment spans residues 252 to 272 (AVLISLAVLFTLLAASMFGLF). The Cytoplasmic segment spans residues 273-292 (EIRLPNTWQQKLNALSQQQQ). The chain crosses the membrane as a helical span at residues 293 to 313 (GGAVGNVFIMGIIAGLVASPC). The Periplasmic portion of the chain corresponds to 314-331 (TSAPLSGALLYVAQSGNL). Residues 332-352 (LIGGLALYLLALGMGLPLILI) form a helical membrane-spanning segment. The Cytoplasmic portion of the chain corresponds to 353-365 (TVFGNQILPKSGE). A helical membrane pass occupies residues 366–386 (WLFKVKTAFGFVMLALPIFLI). Residues 387 to 393 (SRILPSH) lie on the Periplasmic side of the membrane. Residues 394–414 (YEPFLWSTLALAFLGWLISSL) traverse the membrane as a helical segment. Residues 415-425 (NYSTMLKQAVR) are Cytoplasmic-facing. The helical transmembrane segment at 426-446 (ILLFIAFGLTAYPWANLVWQT) threads the bilayer. In terms of domain architecture, Thioredoxin spans 440–573 (ANLVWQTTSN…NQFLAWLNRL (134 aa)). Over 447–573 (TSNTAQPTTP…NQFLAWLNRL (127 aa)) the chain is Periplasmic. The cysteines at positions 490 and 493 are disulfide-linked.

Belongs to the thioredoxin family. DsbD subfamily.

It localises to the cell inner membrane. It catalyses the reaction [protein]-dithiol + NAD(+) = [protein]-disulfide + NADH + H(+). It carries out the reaction [protein]-dithiol + NADP(+) = [protein]-disulfide + NADPH + H(+). Functionally, required to facilitate the formation of correct disulfide bonds in some periplasmic proteins and for the assembly of the periplasmic c-type cytochromes. Acts by transferring electrons from cytoplasmic thioredoxin to the periplasm. This transfer involves a cascade of disulfide bond formation and reduction steps. The chain is Thiol:disulfide interchange protein DsbD from Haemophilus ducreyi (strain 35000HP / ATCC 700724).